The primary structure comprises 226 residues: ATP synthase subunit a (226 aa).

The next 6 membrane-spanning stretches (helical) occupy residues 17–37 (FSYFFHIGLVALIAVIVAMMA), 79–99 (LVATLGIIVFFSNIIGIIPGF), 105–125 (SLNLTLSLAIIVFVYYHFEGI), 134–154 (FAHFMGPIKLLAPLMFPIEIV), 176–196 (LFLMVILALVPYIAPLPAYVL), and 199–219 (FMAFLQAFIFMILTYVYLAGA).

The protein belongs to the ATPase A chain family. In terms of assembly, F-type ATPases have 2 components, CF(1) - the catalytic core - and CF(0) - the membrane proton channel. CF(1) has five subunits: alpha(3), beta(3), gamma(1), delta(1), epsilon(1). CF(0) has three main subunits: a(1), b(2) and c(9-12). The alpha and beta chains form an alternating ring which encloses part of the gamma chain. CF(1) is attached to CF(0) by a central stalk formed by the gamma and epsilon chains, while a peripheral stalk is formed by the delta and b chains.

It is found in the cell inner membrane. Its function is as follows. Key component of the proton channel; it plays a direct role in the translocation of protons across the membrane. This chain is ATP synthase subunit a, found in Campylobacter jejuni subsp. jejuni serotype O:6 (strain 81116 / NCTC 11828).